We begin with the raw amino-acid sequence, 131 residues long: Methylglyoxal synthase (131 aa).

The region spanning 1–131 (MKIALIAHDK…GDLDYRKLRK (131 aa)) is the MGS-like domain. Residues His8, Lys12, 34–37 (TGTT), and 54–55 (SG) each bind substrate. The active-site Proton donor/acceptor is Asp60. His87 is a binding site for substrate.

Belongs to the methylglyoxal synthase family.

It carries out the reaction dihydroxyacetone phosphate = methylglyoxal + phosphate. Its function is as follows. Catalyzes the formation of methylglyoxal from dihydroxyacetone phosphate. This is Methylglyoxal synthase from Bacillus mycoides (strain KBAB4) (Bacillus weihenstephanensis).